We begin with the raw amino-acid sequence, 227 residues long: MAYPLQMGLQDATSPIMEELLHFHDHTLMIVFLISSLVLYIISLMLTTKLTHTSTMDAQEVETVWTILPAIILILIALPSLRILYMMDEINNPSLTVKTMGHQWYWSYEYTDYEDLNFDSYMIPTQELKPGELRLLEVDNRVVLPMEMTIRMLISSEDVLHSWAVPSLGLKTDAIPGRLNQTTLMAMRPGLYYGQCSEICGSNHSFMPIVLELVPLSHFEKWSTSML.

Residues 1-14 (MAYPLQMGLQDATS) lie on the Mitochondrial intermembrane side of the membrane. The helical transmembrane segment at 15–45 (PIMEELLHFHDHTLMIVFLISSLVLYIISLM) threads the bilayer. Residues 46 to 59 (LTTKLTHTSTMDAQ) are Mitochondrial matrix-facing. Residues 60 to 87 (EVETVWTILPAIILILIALPSLRILYMM) form a helical membrane-spanning segment. Residues 88–227 (DEINNPSLTV…HFEKWSTSML (140 aa)) lie on the Mitochondrial intermembrane side of the membrane. Residues His-161, Cys-196, Glu-198, Cys-200, His-204, and Met-207 each coordinate Cu cation. A Mg(2+)-binding site is contributed by Glu-198.

Belongs to the cytochrome c oxidase subunit 2 family. As to quaternary structure, component of the cytochrome c oxidase (complex IV, CIV), a multisubunit enzyme composed of 14 subunits. The complex is composed of a catalytic core of 3 subunits MT-CO1, MT-CO2 and MT-CO3, encoded in the mitochondrial DNA, and 11 supernumerary subunits COX4I, COX5A, COX5B, COX6A, COX6B, COX6C, COX7A, COX7B, COX7C, COX8 and NDUFA4, which are encoded in the nuclear genome. The complex exists as a monomer or a dimer and forms supercomplexes (SCs) in the inner mitochondrial membrane with NADH-ubiquinone oxidoreductase (complex I, CI) and ubiquinol-cytochrome c oxidoreductase (cytochrome b-c1 complex, complex III, CIII), resulting in different assemblies (supercomplex SCI(1)III(2)IV(1) and megacomplex MCI(2)III(2)IV(2)). Found in a complex with TMEM177, COA6, COX18, COX20, SCO1 and SCO2. Interacts with TMEM177 in a COX20-dependent manner. Interacts with COX20. Interacts with COX16. Cu cation serves as cofactor.

The protein resides in the mitochondrion inner membrane. The catalysed reaction is 4 Fe(II)-[cytochrome c] + O2 + 8 H(+)(in) = 4 Fe(III)-[cytochrome c] + 2 H2O + 4 H(+)(out). Component of the cytochrome c oxidase, the last enzyme in the mitochondrial electron transport chain which drives oxidative phosphorylation. The respiratory chain contains 3 multisubunit complexes succinate dehydrogenase (complex II, CII), ubiquinol-cytochrome c oxidoreductase (cytochrome b-c1 complex, complex III, CIII) and cytochrome c oxidase (complex IV, CIV), that cooperate to transfer electrons derived from NADH and succinate to molecular oxygen, creating an electrochemical gradient over the inner membrane that drives transmembrane transport and the ATP synthase. Cytochrome c oxidase is the component of the respiratory chain that catalyzes the reduction of oxygen to water. Electrons originating from reduced cytochrome c in the intermembrane space (IMS) are transferred via the dinuclear copper A center (CU(A)) of subunit 2 and heme A of subunit 1 to the active site in subunit 1, a binuclear center (BNC) formed by heme A3 and copper B (CU(B)). The BNC reduces molecular oxygen to 2 water molecules using 4 electrons from cytochrome c in the IMS and 4 protons from the mitochondrial matrix. The sequence is that of Cytochrome c oxidase subunit 2 (MT-CO2) from Halichoerus grypus (Gray seal).